Consider the following 815-residue polypeptide: DNA topoisomerase 1 (815 aa).

Residues 3–119 (KHLLIVESPA…QRIVFTEITP (117 aa)) form the Toprim domain. Residues Glu-9 and Asp-82 each contribute to the Mg(2+) site. The Topo IA-type catalytic domain maps to 133 to 573 (ASDLVDAQQA…KFWVPFKELV (441 aa)). The interaction with DNA stretch occupies residues 167–172 (SAGRVQ). Tyr-308 acts as the O-(5'-phospho-DNA)-tyrosine intermediate in catalysis. Positions 759–815 (TGKPARKNFSTKKTATKNETRKQTTKKRTTDAKATKKVSDKPVKKQIKKRIAPNITQ) are disordered. A compositionally biased stretch (basic and acidic residues) spans 774–801 (TKNETRKQTTKKRTTDAKATKKVSDKPV).

The protein belongs to the type IA topoisomerase family. Monomer. The cofactor is Mg(2+).

The enzyme catalyses ATP-independent breakage of single-stranded DNA, followed by passage and rejoining.. In terms of biological role, releases the supercoiling and torsional tension of DNA, which is introduced during the DNA replication and transcription, by transiently cleaving and rejoining one strand of the DNA duplex. Introduces a single-strand break via transesterification at a target site in duplex DNA. The scissile phosphodiester is attacked by the catalytic tyrosine of the enzyme, resulting in the formation of a DNA-(5'-phosphotyrosyl)-enzyme intermediate and the expulsion of a 3'-OH DNA strand. The free DNA strand then undergoes passage around the unbroken strand, thus removing DNA supercoils. Finally, in the religation step, the DNA 3'-OH attacks the covalent intermediate to expel the active-site tyrosine and restore the DNA phosphodiester backbone. The polypeptide is DNA topoisomerase 1 (Xylella fastidiosa (strain Temecula1 / ATCC 700964)).